Here is a 156-residue protein sequence, read N- to C-terminus: Endoribonuclease YbeY (156 aa).

Zn(2+) is bound by residues His-122, His-126, and His-132.

Belongs to the endoribonuclease YbeY family. The cofactor is Zn(2+).

The protein resides in the cytoplasm. Functionally, single strand-specific metallo-endoribonuclease involved in late-stage 70S ribosome quality control and in maturation of the 3' terminus of the 16S rRNA. The chain is Endoribonuclease YbeY from Bacillus cereus (strain G9842).